The primary structure comprises 399 residues: Acetate kinase (399 aa).

Residue Asn9 coordinates Mg(2+). Lys16 lines the ATP pocket. Arg90 provides a ligand contact to substrate. Asp147 functions as the Proton donor/acceptor in the catalytic mechanism. Residues 207–211, 281–283, and 333–337 each bind ATP; these read HLGNG, DFR, and GVGEN. A Mg(2+)-binding site is contributed by Glu387.

This sequence belongs to the acetokinase family. Homodimer. The cofactor is Mg(2+). It depends on Mn(2+) as a cofactor.

The protein localises to the cytoplasm. The catalysed reaction is acetate + ATP = acetyl phosphate + ADP. It functions in the pathway metabolic intermediate biosynthesis; acetyl-CoA biosynthesis; acetyl-CoA from acetate: step 1/2. Catalyzes the formation of acetyl phosphate from acetate and ATP. Can also catalyze the reverse reaction. The polypeptide is Acetate kinase (Mycobacterium sp. (strain JLS)).